The primary structure comprises 524 residues: CTP synthase (524 aa).

Residues 1–263 form an amidoligase domain region; sequence MKKYVIVTGG…HEKIASKLNV (263 aa). S13 is a binding site for CTP. A UTP-binding site is contributed by S13. Residues 14–19 and D71 each bind ATP; that span reads GIGKGI. Mg(2+)-binding residues include D71 and E137. Residues 144–146, 184–189, and K220 each bind CTP; these read DIE and KTKPTQ. Residues 184 to 189 and K220 each bind UTP; that span reads KTKPTQ. In terms of domain architecture, Glutamine amidotransferase type-1 spans 282-524; the sequence is RIALVGKYLG…YLRKVLEGSQ (243 aa). G342 contributes to the L-glutamine binding site. C369 (nucleophile; for glutamine hydrolysis) is an active-site residue. Residues 370–373, E393, and R451 contribute to the L-glutamine site; that span reads LGMQ. Residues H499 and E501 contribute to the active site.

Belongs to the CTP synthase family. In terms of assembly, homotetramer.

It carries out the reaction UTP + L-glutamine + ATP + H2O = CTP + L-glutamate + ADP + phosphate + 2 H(+). It catalyses the reaction L-glutamine + H2O = L-glutamate + NH4(+). The catalysed reaction is UTP + NH4(+) + ATP = CTP + ADP + phosphate + 2 H(+). The protein operates within pyrimidine metabolism; CTP biosynthesis via de novo pathway; CTP from UDP: step 2/2. With respect to regulation, allosterically activated by GTP, when glutamine is the substrate; GTP has no effect on the reaction when ammonia is the substrate. The allosteric effector GTP functions by stabilizing the protein conformation that binds the tetrahedral intermediate(s) formed during glutamine hydrolysis. Inhibited by the product CTP, via allosteric rather than competitive inhibition. Catalyzes the ATP-dependent amination of UTP to CTP with either L-glutamine or ammonia as the source of nitrogen. Regulates intracellular CTP levels through interactions with the four ribonucleotide triphosphates. This is CTP synthase from Thermotoga maritima (strain ATCC 43589 / DSM 3109 / JCM 10099 / NBRC 100826 / MSB8).